The chain runs to 151 residues: UPF0756 membrane protein GTNG_2661 (151 aa).

The next 4 helical transmembrane spans lie at 5–25 (VLFL…SLII), 53–73 (WGVT…EIGF), 86–106 (WIAL…VMLL), and 116–136 (LVLG…GPLI).

It belongs to the UPF0756 family.

The protein localises to the cell membrane. This Geobacillus thermodenitrificans (strain NG80-2) protein is UPF0756 membrane protein GTNG_2661.